The primary structure comprises 154 residues: 3-hydroxyacyl-[acyl-carrier-protein] dehydratase FabZ (154 aa).

His58 is a catalytic residue.

It belongs to the thioester dehydratase family. FabZ subfamily.

The protein localises to the cytoplasm. The catalysed reaction is a (3R)-hydroxyacyl-[ACP] = a (2E)-enoyl-[ACP] + H2O. Functionally, involved in unsaturated fatty acids biosynthesis. Catalyzes the dehydration of short chain beta-hydroxyacyl-ACPs and long chain saturated and unsaturated beta-hydroxyacyl-ACPs. In Protochlamydia amoebophila (strain UWE25), this protein is 3-hydroxyacyl-[acyl-carrier-protein] dehydratase FabZ.